A 312-amino-acid chain; its full sequence is 4-diphosphocytidyl-2-C-methyl-D-erythritol kinase (312 aa).

K10 is an active-site residue. Residue 105–115 (PVAGGMAGGSA) participates in ATP binding. The active site involves D146.

The protein belongs to the GHMP kinase family. IspE subfamily.

The enzyme catalyses 4-CDP-2-C-methyl-D-erythritol + ATP = 4-CDP-2-C-methyl-D-erythritol 2-phosphate + ADP + H(+). Its pathway is isoprenoid biosynthesis; isopentenyl diphosphate biosynthesis via DXP pathway; isopentenyl diphosphate from 1-deoxy-D-xylulose 5-phosphate: step 3/6. Catalyzes the phosphorylation of the position 2 hydroxy group of 4-diphosphocytidyl-2C-methyl-D-erythritol. The chain is 4-diphosphocytidyl-2-C-methyl-D-erythritol kinase from Corynebacterium glutamicum (strain R).